A 281-amino-acid polypeptide reads, in one-letter code: Stomatin-4 (281 aa).

A helical transmembrane segment spans residues 28–48 (WIITIISYLVVLFTLPLSAFF).

Belongs to the band 7/mec-2 family.

It is found in the membrane. In Caenorhabditis elegans, this protein is Stomatin-4 (sto-4).